The sequence spans 469 residues: Trigger factor (469 aa).

Positions 162-243 (GDFVSIDLSA…VKSVKERELP (82 aa)) constitute a PPIase FKBP-type domain. Residues 429-469 (NTIDTSEFFGKHAQSDKADQKTEEADPNSDAIDEEVDEAAE) form a disordered region. Basic and acidic residues predominate over residues 437–452 (FGKHAQSDKADQKTEE). The segment covering 453–469 (ADPNSDAIDEEVDEAAE) has biased composition (acidic residues).

The protein belongs to the FKBP-type PPIase family. Tig subfamily.

Its subcellular location is the cytoplasm. It catalyses the reaction [protein]-peptidylproline (omega=180) = [protein]-peptidylproline (omega=0). Its function is as follows. Involved in protein export. Acts as a chaperone by maintaining the newly synthesized protein in an open conformation. Functions as a peptidyl-prolyl cis-trans isomerase. The sequence is that of Trigger factor from Mycobacterium leprae (strain Br4923).